The chain runs to 88 residues: FAD assembly factor SdhE (88 aa).

This sequence belongs to the SdhE FAD assembly factor family. In terms of assembly, monomer. Makes weak or transient interactions with SdhA. Interacts with YgfX. Interacts with FrdA.

It is found in the cytoplasm. It functions in the pathway antibiotic biosynthesis; prodigiosin biosynthesis. Functionally, an FAD assembly protein, which accelerates covalent attachment of the cofactor into other proteins. Plays an essential role in the assembly of succinate dehydrogenase (SDH, respiratory complex II), an enzyme complex that is a component of both the tricarboxylic acid cycle and the electron transport chain, and which couples the oxidation of succinate to fumarate with the reduction of ubiquinone (coenzyme Q) to ubiquinol. Required for flavinylation (covalent attachment of FAD) of the flavoprotein subunit SdhA of SDH. Required for flavinylation of the flavoprotein subunit FrdA of fumarate reductase (FRD). Flavinylation of SDH and FRD occurs in a similar but not identical manner, as site-specific mutations display subtle differences between them. Flavinylates SdhA in vivo in the absence of the other SDH subunits; SdhE mutants that do not flavinylate also interfere with wild-type activity in a possible dominant-negative fashion. Weakly binds to FAD and facilitates its binding to SdhA. Required for production of prodigiosin antibiotic (Pig); overproduction of SdhE in a deletion mutant leads to decreased synthesis of Pig compared to wild-type. Capable of flavinylating A.pasteurianus SdhA when the SDH operon and this gene are expressed in G.oxydans; flavinylation of SdhA is detected only in the presence of sdhE. The chain is FAD assembly factor SdhE from Serratia sp. (strain ATCC 39006) (Prodigiosinella confusarubida).